Here is a 232-residue protein sequence, read N- to C-terminus: 2,3,4,5-tetrahydropyridine-2,6-dicarboxylate N-acetyltransferase (232 aa).

This sequence belongs to the transferase hexapeptide repeat family. DapH subfamily.

The enzyme catalyses (S)-2,3,4,5-tetrahydrodipicolinate + acetyl-CoA + H2O = L-2-acetamido-6-oxoheptanedioate + CoA. It functions in the pathway amino-acid biosynthesis; L-lysine biosynthesis via DAP pathway; LL-2,6-diaminopimelate from (S)-tetrahydrodipicolinate (acetylase route): step 1/3. In terms of biological role, catalyzes the transfer of an acetyl group from acetyl-CoA to tetrahydrodipicolinate. The protein is 2,3,4,5-tetrahydropyridine-2,6-dicarboxylate N-acetyltransferase of Streptococcus suis (strain 98HAH33).